The following is a 207-amino-acid chain: Outer-membrane lipoprotein LolB (207 aa).

Residues Met1–Ala21 form the signal peptide. The N-palmitoyl cysteine moiety is linked to residue Cys22. A lipid anchor (S-diacylglycerol cysteine) is attached at Cys22.

The protein belongs to the LolB family. Monomer.

Its subcellular location is the cell outer membrane. In terms of biological role, plays a critical role in the incorporation of lipoproteins in the outer membrane after they are released by the LolA protein. This Shigella sonnei (strain Ss046) protein is Outer-membrane lipoprotein LolB.